The following is a 107-amino-acid chain: UPF0060 membrane protein M446_5886 (107 aa).

4 helical membrane-spanning segments follow: residues 4–24, 31–51, 59–79, and 85–105; these read LLAY…IWAW, PLWL…LTRV, AYAA…WAAE, and RWDL…LLGP.

It belongs to the UPF0060 family.

Its subcellular location is the cell inner membrane. This is UPF0060 membrane protein M446_5886 from Methylobacterium sp. (strain 4-46).